We begin with the raw amino-acid sequence, 285 residues long: Probable endonuclease 4 (285 aa).

9 residues coordinate Zn(2+): His-69, His-109, Glu-145, Asp-179, His-182, His-216, Asp-229, His-231, and Glu-261.

The protein belongs to the AP endonuclease 2 family. Zn(2+) serves as cofactor.

The enzyme catalyses Endonucleolytic cleavage to 5'-phosphooligonucleotide end-products.. Endonuclease IV plays a role in DNA repair. It cleaves phosphodiester bonds at apurinic or apyrimidinic (AP) sites, generating a 3'-hydroxyl group and a 5'-terminal sugar phosphate. The chain is Probable endonuclease 4 from Citrobacter koseri (strain ATCC BAA-895 / CDC 4225-83 / SGSC4696).